Consider the following 385-residue polypeptide: Leucine aminopeptidase 1 (385 aa).

The first 20 residues, 1–20, serve as a signal peptide directing secretion; the sequence is MKLPSLLSLGVAASTTIVAA. A propeptide spanning residues 21-87 is cleaved from the precursor; it reads VPDQKPIGDT…FPKTFAQTTV (67 aa). The N-linked (GlcNAc...) asparagine glycan is linked to Asn177. Residues His185, Asp204, Glu243, and Asp270 each coordinate Zn(2+). A disulfide bridge connects residues Cys319 and Cys323. His352 is a Zn(2+) binding site.

The protein belongs to the peptidase M28 family. M28E subfamily. Monomer. The cofactor is Zn(2+).

It is found in the secreted. Functionally, extracellular aminopeptidase that allows assimilation of proteinaceous substrates. The chain is Leucine aminopeptidase 1 (LAP1) from Ajellomyces capsulatus (strain NAm1 / WU24) (Darling's disease fungus).